The sequence spans 932 residues: 2-oxoglutarate dehydrogenase E1 component (932 aa).

Belongs to the alpha-ketoglutarate dehydrogenase family. As to quaternary structure, homodimer. Part of the 2-oxoglutarate dehydrogenase (OGDH) complex composed of E1 (2-oxoglutarate dehydrogenase), E2 (dihydrolipoamide succinyltransferase) and E3 (dihydrolipoamide dehydrogenase); the complex contains multiple copies of the three enzymatic components (E1, E2 and E3). Thiamine diphosphate serves as cofactor.

It catalyses the reaction N(6)-[(R)-lipoyl]-L-lysyl-[protein] + 2-oxoglutarate + H(+) = N(6)-[(R)-S(8)-succinyldihydrolipoyl]-L-lysyl-[protein] + CO2. In terms of biological role, E1 component of the 2-oxoglutarate dehydrogenase (OGDH) complex which catalyzes the decarboxylation of 2-oxoglutarate, the first step in the conversion of 2-oxoglutarate to succinyl-CoA and CO(2). The protein is 2-oxoglutarate dehydrogenase E1 component of Staphylococcus aureus (strain MRSA252).